The following is a 1252-amino-acid chain: MFKCPERVSVKKKEDILDLPNLIEIQIKSYKQFLQIGKLAEERDNVGLEEVFREIFPIKSYNEATILEYLSYNLGVPKYSPEECIRRGITYSVTLKVRFRLTDETGIKEEEVYMGTIPIMTDKGTFIINGAERVIVSQVHRSPGINFEQEKHSKGNILFSFRIIPYRGSWLEAIFDINDLIYIHIDRKKRRRKILAMTFIRALGYSSDADIIEEFFQIEERSLKSEKDFTLLVGKILADNVLDESSSLVYGKAGEKLSTAMLKRMLDADISTLKIAVEADENHPIIKMLAKDPTDSYEAALKDFYRRLRPGEPATLANARSTIMRLFFDSKRYNLGRVGRYKLNRKLGFPMDEETLSQVTLRKEDVIGALKYLIRLKMGDERASIDDIDHLANRRVRSVGELIQNQCRSGLARMEKIVRERMNLFDFSSDTLIPGKIISAKGLASVLKDFFGRSQLSQFMDQTNPVAELTHKRRLSALGPGGLNRERAGFEVRDVHASHYGRICPIETPEGPNIGLITSLSSFAKINEFGFIETPYRIVRDGVVTDEIEYMTADVEEECVIAQASAALDEYNMFVDPVCWARCRGEAFEADTSTVTHMDVSPKQLVSIVTGLIPFLEHDDANRALMGSNMQRQAVPLLKTEAPIVGTGLEARAAKDSGAIVVAEEDGVVDYVDGYKVVIAPKHNPTLKRTYDLKKFLRSNSGTCINQRPLCSVGDVIVKGDVIADGPATDQGELALGKNILVAFMPWYGYNFEDAIIISEKLIKQDAYTSIYIEEFELTARDTKLGKEEITRDIPNVSEEVLANLGEDGIIRIGAEVKPGDILVGKITPKSETELAPEERLLRAIFGEKAADVKDASLTVPPGTEGVVMDVKVFSRKDRLSKSDDELVEEAVHLKDLQKGYKNQVSVLKTEYREKLGALLLNEKAPASIIHRRTADILVQEGTVFDQETIELLEQESLVDLLMPPCEMYDVLKGLLSDYETSLQRLEVNYKTEVEHIREGDADLDHGVIRQVKVYVASKRKLQVGDKMAGRHGNKGVVSKIVPEADMPYLANGETVQMILNPLGVPSRMNLGQVLETHLGYAAKTAGIHVKTPVFEGFPESRIWDMMIEQGLPADGKSYLYDGKTGERFDNTVVIGYIYMLKLSHLIADKIHARSIGPYSLVTQQPLGGKAQMGGQRFGEMEVWALEAYGVAHMLQEILTVKSDDVSGRTRIYESIVKGENLLKSGTPESFNVLIKEMQGLGLDVRPMVVDA.

This sequence belongs to the RNA polymerase beta chain family. In terms of assembly, the RNAP catalytic core consists of 2 alpha, 1 beta, 1 beta' and 1 omega subunit. When a sigma factor is associated with the core the holoenzyme is formed, which can initiate transcription.

The catalysed reaction is RNA(n) + a ribonucleoside 5'-triphosphate = RNA(n+1) + diphosphate. DNA-dependent RNA polymerase catalyzes the transcription of DNA into RNA using the four ribonucleoside triphosphates as substrates. This is DNA-directed RNA polymerase subunit beta from Chlamydia caviae (strain ATCC VR-813 / DSM 19441 / 03DC25 / GPIC) (Chlamydophila caviae).